We begin with the raw amino-acid sequence, 371 residues long: Neuropeptide S receptor (371 aa).

At 1 to 52 (MPANLTEGSFHANQTVPMLDSSPVACTEIVTFTEALVAEEWGSFYSSFKTEQ) the chain is on the extracellular side. N-linked (GlcNAc...) asparagine glycosylation is found at N4 and N13. The helical transmembrane segment at 53-73 (LITLWVLFVVTIVGNSVVLFS) threads the bilayer. At 74–82 (TCRRKRKSR) the chain is on the cytoplasmic side. A helical membrane pass occupies residues 83 to 103 (MTFFVTQLAITDSFTGLINIL). Residues 104 to 123 (TDIIWRFTGDFMAPDLVCRV) are Extracellular-facing. A disulfide bridge connects residues C121 and C197. A helical membrane pass occupies residues 124 to 144 (VRYLQVVLLYASTYVLVSLSI). At 145–164 (DRYHAIVYPMKFLQGEKQAK) the chain is on the cytoplasmic side. The chain crosses the membrane as a helical span at residues 165-185 (VLIGIAWSLSFLFSIPTLIIF). Residues 186-212 (GKRTLSNGEVQCWALWPDDSYWTPYMT) lie on the Extracellular side of the membrane. Residues 213–233 (IVAFLVYFIPLAIISVIYGLV) form a helical membrane-spanning segment. Topologically, residues 234–275 (IRTIWMKSKTHETVISNCSDGKLCCSYNRGLISKAKIKAIKY) are cytoplasmic. A helical membrane pass occupies residues 276–296 (SIVIILAFICCWSPYFLFDIL). Topologically, residues 297-312 (DNFNVLPDTKERFYAS) are extracellular. The helical transmembrane segment at 313 to 333 (VIIQNLPALNSAINPLIYCIF) threads the bilayer. At 334 to 371 (SSSICSPCKMQRSQDSRMTYRERSERHEMQILSKPEFI) the chain is on the cytoplasmic side.

It belongs to the G-protein coupled receptor 1 family. Vasopressin/oxytocin receptor subfamily.

It localises to the cell membrane. Its function is as follows. G-protein coupled receptor for neuropeptide S (NPS). Promotes mobilization of intracellular Ca(2+) stores. Inhibits cell growth in response to NPS binding. Involved in pathogenesis of asthma and other IgE-mediated diseases. The sequence is that of Neuropeptide S receptor (Npsr1) from Mus musculus (Mouse).